Here is a 256-residue protein sequence, read N- to C-terminus: Small ribosomal subunit protein uS2 (256 aa).

It belongs to the universal ribosomal protein uS2 family.

This is Small ribosomal subunit protein uS2 from Geotalea uraniireducens (strain Rf4) (Geobacter uraniireducens).